The chain runs to 260 residues: Snake venom serine proteinase 4a (260 aa).

The N-terminal stretch at Met1–Ala18 is a signal peptide. The propeptide occupies Gln19–Leu24. The Peptidase S1 domain occupies Val25 to Ala251. 6 cysteine pairs are disulfide-bonded: Cys31–Cys163, Cys50–Cys66, Cys98–Cys258, Cys142–Cys212, Cys174–Cys191, and Cys202–Cys227. The active-site Charge relay system is His65. N-linked (GlcNAc...) asparagine glycosylation occurs at Asn103. Asp110 acts as the Charge relay system in catalysis. The active-site Charge relay system is Ser206.

The protein belongs to the peptidase S1 family. Snake venom subfamily. Monomer. Expressed by the venom gland.

The protein resides in the secreted. Its function is as follows. Snake venom serine protease that may act in the hemostasis system of the prey. This chain is Snake venom serine proteinase 4a, found in Crotalus adamanteus (Eastern diamondback rattlesnake).